The chain runs to 550 residues: Transcription factor p65 (550 aa).

Met-1 bears the N-acetylmethionine mark. Residues 16–190 (ASGPYVEIIE…HPIFDNRAPN (175 aa)) form the RHD domain. Residue Lys-37 forms a Glycyl lysine isopeptide (Lys-Gly) (interchain with G-Cter in SUMO3) linkage. Cys-38 is subject to Cysteine persulfide; alternate. The residue at position 38 (Cys-38) is an S-nitrosocysteine; alternate. Residues Lys-122, Lys-123, Lys-218, and Lys-221 each carry the N6-acetyllysine modification. Residues Lys-122 and Lys-123 each participate in a glycyl lysine isopeptide (Lys-Gly) (interchain with G-Cter in SUMO3); alternate cross-link. Phosphothreonine is present on Thr-254. 2 positions are modified to phosphoserine: Ser-276 and Ser-281. A Nuclear localization signal motif is present at residues 301-304 (KRKR). Lys-310 carries the post-translational modification N6-acetyllysine; alternate. The residue at position 310 (Lys-310) is an N6-methyllysine. A Phosphoserine modification is found at Ser-311. Transcriptional activation domain stretches follow at residues 342-388 (PKPA…APVL) and 414-476 (PGPP…EFQQ). At Thr-434 the chain carries Phosphothreonine. Ser-468 carries the post-translational modification Phosphoserine. Thr-505 is subject to Phosphothreonine. Residues 520-550 (TSGLPNGLSGDEDFSSIADMDFSALLSQISS) form a transcriptional activation domain 2 region. A Phosphoserine modification is found at Ser-535. Positions 535–543 (SIADMDFSA) match the 9aaTAD motif.

Component of the NF-kappa-B p65-p50 complex. Component of the NF-kappa-B p65-c-Rel complex. Homodimer; component of the NF-kappa-B p65-p65 complex. Component of the NF-kappa-B p65-p52 complex. May interact with ETHE1. Binds TLE5 and TLE1. Interacts with TP53BP2. Binds to and is phosphorylated by the activated form of either RPS6KA4 or RPS6KA5. Interacts with ING4 and this interaction may be indirect. Interacts with CARM1, USP48 and UNC5CL. Interacts with IRAK1BP1. Interacts with NFKBID. Interacts with NFKBIA. Interacts with GSK3B. Interacts with NFKBIB. Interacts with NFKBIE. Interacts with NFKBIZ. Interacts with EHMT1 (via ANK repeats). Part of a 70-90 kDa complex at least consisting of CHUK, IKBKB, NFKBIA, RELA, ELP1 and MAP3K14. Interacts with HDAC3; HDAC3 mediates the deacetylation of RELA. Interacts with HDAC1; the interaction requires non-phosphorylated RELA. Interacts with CBP; the interaction requires phosphorylated RELA. Interacts (phosphorylated at 'Thr-254') with PIN1; the interaction inhibits p65 binding to NFKBIA. Interacts with SOCS1. Interacts with UXT. Interacts with MTDH and PHF11. Interacts with ARRB2. Interacts with NFKBIA (when phosphorylated), the interaction is direct; phosphorylated NFKBIA is part of a SCF(BTRC)-like complex lacking CUL1. Interacts with RNF25. Interacts (via C-terminus) with DDX1. Interacts with UFL1 and COMMD1. Interacts with BRMS1; this promotes deacetylation of 'Lys-310'. Interacts with NOTCH2. Directly interacts with MEN1; this interaction represses NFKB-mediated transactivation. Interacts with AKIP1, which promotes the phosphorylation and nuclear retention of RELA. Interacts (via the RHD) with GFI1; the interaction, after bacterial lipopolysaccharide (LPS) stimulation, inhibits the transcriptional activity by interfering with the DNA-binding activity to target gene promoter DNA. Interacts (when acetylated at Lys-310) with BRD4; leading to activation of the NF-kappa-B pathway. Interacts with MEFV. Interacts with CLOCK. Interacts (via N-terminus) with CPEN1; this interaction induces proteolytic cleavage of p65/RELA subunit and inhibition of NF-kappa-B transcriptional activity. Interacts with FOXP3. Interacts with CDK5RAP3; stimulates the interaction of RELA with HDAC1, HDAC2 and HDAC3 thereby inhibiting NF-kappa-B transcriptional activity. Interacts with DHX9; this interaction is direct and activates NF-kappa-B-mediated transcription. Interacts with LRRC25. Interacts with TBX21. Interacts with KAT2A. Interacts with ZBTB7A; involved in the control by RELA of the accessibility of target gene promoters. Directly interacts with DDX3X; this interaction may trap RELA in the cytoplasm, impairing nuclear relocalization upon TNF activating signals. Interacts with PHF2. Interacts with MKRN2; the interaction leads to its polyubiquitination and proteasome-dependent degradation. Interacts with ECSIT. Interacts with RAB28; the interaction contributes to RELA transport from cytoplasm to nucleus. Post-translationally, ubiquitinated by RNF182, leading to its proteasomal degradation. Degradation is required for termination of NF-kappa-B response. Polyubiquitinated via 'Lys-29'-linked ubiquitin; leading to lysosomal degradation. In terms of processing, monomethylated at Lys-310 by SETD6. Monomethylation at Lys-310 is recognized by the ANK repeats of EHMT1 and promotes the formation of repressed chromatin at target genes, leading to down-regulation of NF-kappa-B transcription factor activity. Phosphorylation at Ser-311 disrupts the interaction with EHMT1 without preventing monomethylation at Lys-310 and relieves the repression of target genes. Phosphorylation at Ser-311 disrupts the interaction with EHMT1 and promotes transcription factor activity. Phosphorylation on Ser-535 stimulates acetylation on Lys-310 and interaction with CBP; the phosphorylated and acetylated forms show enhanced transcriptional activity. Phosphorylation at Ser-276 by RPS6KA4 and RPS6KA5 promotes its transactivation and transcriptional activities. Post-translationally, phosphorylation at Ser-75 by herpes simplex virus 1/HHV-1 inhibits NF-kappa-B activation. In terms of processing, reversibly acetylated; the acetylation seems to be mediated by CBP, the deacetylation by HDAC3 and SIRT2. Acetylation at Lys-122 enhances DNA binding and impairs association with NFKBIA. Acetylation at Lys-310 is required for full transcriptional activity in the absence of effects on DNA binding and NFKBIA association. Acetylation at Lys-310 promotes interaction with BRD4. Acetylation can also lower DNA-binding and results in nuclear export. Interaction with BRMS1 promotes deacetylation of Lys-310. Lys-310 is deacetylated by SIRT2. S-nitrosylation of Cys-38 inactivates the enzyme activity. Post-translationally, sulfhydration at Cys-38 mediates the anti-apoptotic activity by promoting the interaction with RPS3 and activating the transcription factor activity. In terms of processing, sumoylation by PIAS3 negatively regulates DNA-bound activated NF-kappa-B. Proteolytically cleaved within a conserved N-terminus region required for base-specific contact with DNA in a CPEN1-mediated manner, and hence inhibits NF-kappa-B transcriptional activity.

Its subcellular location is the nucleus. It localises to the cytoplasm. Functionally, NF-kappa-B is a pleiotropic transcription factor present in almost all cell types and is the endpoint of a series of signal transduction events that are initiated by a vast array of stimuli related to many biological processes such as inflammation, immunity, differentiation, cell growth, tumorigenesis and apoptosis. NF-kappa-B is a homo- or heterodimeric complex formed by the Rel-like domain-containing proteins RELA/p65, RELB, NFKB1/p105, NFKB1/p50, REL and NFKB2/p52. The heterodimeric RELA-NFKB1 complex appears to be most abundant one. The dimers bind at kappa-B sites in the DNA of their target genes and the individual dimers have distinct preferences for different kappa-B sites that they can bind with distinguishable affinity and specificity. Different dimer combinations act as transcriptional activators or repressors, respectively. The NF-kappa-B heterodimeric RELA-NFKB1 and RELA-REL complexes, for instance, function as transcriptional activators. NF-kappa-B is controlled by various mechanisms of post-translational modification and subcellular compartmentalization as well as by interactions with other cofactors or corepressors. NF-kappa-B complexes are held in the cytoplasm in an inactive state complexed with members of the NF-kappa-B inhibitor (I-kappa-B) family. In a conventional activation pathway, I-kappa-B is phosphorylated by I-kappa-B kinases (IKKs) in response to different activators, subsequently degraded thus liberating the active NF-kappa-B complex which translocates to the nucleus. The inhibitory effect of I-kappa-B on NF-kappa-B through retention in the cytoplasm is exerted primarily through the interaction with RELA. RELA shows a weak DNA-binding site which could contribute directly to DNA binding in the NF-kappa-B complex. Besides its activity as a direct transcriptional activator, it is also able to modulate promoters accessibility to transcription factors and thereby indirectly regulate gene expression. Associates with chromatin at the NF-kappa-B promoter region via association with DDX1. Essential for cytokine gene expression in T-cells. The NF-kappa-B homodimeric RELA-RELA complex appears to be involved in invasin-mediated activation of IL-8 expression. Key transcription factor regulating the IFN response during SARS-CoV-2 infection. In Rattus norvegicus (Rat), this protein is Transcription factor p65.